Here is a 111-residue protein sequence, read N- to C-terminus: N-alpha-acetyltransferase 38-B, NatC auxiliary subunit (111 aa).

Residues 28–106 form the Sm domain; sequence TARHKLESLL…IVSIQVELET (79 aa).

The protein belongs to the snRNP Sm proteins family. In terms of assembly, component of the N-terminal acetyltransferase C (NatC) complex, which is composed of naa35, naa38 and naa30.

It is found in the cytoplasm. In terms of biological role, auxillary component of the N-terminal acetyltransferase C (NatC) complex which catalyzes acetylation of N-terminal methionine residues. This is N-alpha-acetyltransferase 38-B, NatC auxiliary subunit (naa38-b) from Xenopus laevis (African clawed frog).